The chain runs to 152 residues: Large ribosomal subunit protein bL9 (152 aa).

Residues 41–61 form a disordered region; it reads QSAMSQLNAERKAEQRREAEE. The segment covering 49–61 has biased composition (basic and acidic residues); that stretch reads AERKAEQRREAEE.

The protein belongs to the bacterial ribosomal protein bL9 family.

Functionally, binds to the 23S rRNA. In Levilactobacillus brevis (strain ATCC 367 / BCRC 12310 / CIP 105137 / JCM 1170 / LMG 11437 / NCIMB 947 / NCTC 947) (Lactobacillus brevis), this protein is Large ribosomal subunit protein bL9.